Consider the following 348-residue polypeptide: High mobility group protein 20A (348 aa).

2 disordered regions span residues 1–114 (MENL…YVRF) and 181–213 (SRKA…DTKE). 2 stretches are compositionally biased toward polar residues: residues 34-47 (SESS…QPVN) and 56-71 (SQVQ…TAEN). Residues 72 to 82 (TEQKPEEEQQR) are compositionally biased toward basic and acidic residues. A compositionally biased stretch (basic residues) spans 83–97 (TKRGGWAKGRKRKKP). The HMG box DNA-binding region spans 104-172 (PKSPLTGYVR…RYMRELEQYQ (69 aa)). Positions 183–213 (KAQDRQKGKLHRQDGARQPVHDHEKEADTKE) are enriched in basic and acidic residues. Residues 230-274 (SKAREAELRQLRKSNMEFEERNAALQKHVESMRTAVEKLEVDVIQ) are a coiled coil.

The protein resides in the nucleus. Functionally, plays a role in neuronal differentiation. The polypeptide is High mobility group protein 20A (HMG20A) (Gallus gallus (Chicken)).